The primary structure comprises 422 residues: Synaptotagmin-2 (422 aa).

The disordered stretch occupies residues Met-1–Gln-43. Residues Met-1–Lys-60 lie on the Vesicular side of the membrane. Low complexity predominate over residues Ala-14–Ala-30. The span at Asp-31–Gly-40 shows a compositional bias: polar residues. Asn-32 carries an N-linked (GlcNAc...) asparagine glycan. The helical transmembrane segment at Ile-61 to Cys-87 threads the bilayer. Over Lys-88–Lys-422 the chain is Cytoplasmic. The disordered stretch occupies residues Gly-102–Glu-141. The span at Asp-119–Glu-139 shows a compositional bias: acidic residues. Phosphothreonine occurs at positions 125 and 128. The tract at residues Glu-136–Asn-382 is phospholipid binding. C2 domains lie at Asn-142 to Arg-261 and Lys-273 to His-406. Residues Leu-172, Asp-173, and Asp-179 each contribute to the Ca(2+) site. Residue Thr-202 is modified to Phosphothreonine. At Tyr-230 the chain carries Phosphotyrosine. Ca(2+) contacts are provided by Asp-231, Phe-232, Asp-233, Ser-236, Lys-237, Asp-239, Asp-304, Asp-310, Asp-364, and Asp-366. At Thr-386 the chain carries Phosphothreonine.

Belongs to the synaptotagmin family. In terms of assembly, homotetramer. Heterodimer; heterodimerizes with SYT1 in presence of calcium. Interacts with SCAMP5. Interacts with STON2. Interacts with PRRT2. As to quaternary structure, (Microbial infection) Interacts with C.botulinum neurotoxin type B (BoNT/B, botB). (Microbial infection) Interacts with C.botulinum neurotoxin type G (BoNT/G, botG). Ca(2+) is required as a cofactor. In terms of processing, phosphorylation at Thr-202 by WNK1, changes the calcium requirement for SYT2-binding to phospholipid membranes.

It is found in the cytoplasmic vesicle. Its subcellular location is the secretory vesicle. The protein localises to the synaptic vesicle membrane. The protein resides in the chromaffin granule membrane. It localises to the cytoplasm. In terms of biological role, exhibits calcium-dependent phospholipid and inositol polyphosphate binding properties. May have a regulatory role in the membrane interactions during trafficking of synaptic vesicles at the active zone of the synapse. Plays a role in dendrite formation by melanocytes. Its function is as follows. (Microbial infection) Receptor for C.botulinum neurotoxin type B (BoNT/B, botB); interaction is improved in the presence of gangliosides. The toxin binds via the vesicular domain (residues 47-60). Functionally, (Microbial infection) Receptor for C.botulinum neurotoxin type G (BoNT/G, botG); gangliosides are not required for (or only very slightly improve) binding to a membrane-anchored receptor fragment. The toxin binds via the vesicular domain (residues 47-55). This Mus musculus (Mouse) protein is Synaptotagmin-2.